The primary structure comprises 151 residues: Large ribosomal subunit protein uL13 (151 aa).

It belongs to the universal ribosomal protein uL13 family. As to quaternary structure, part of the 50S ribosomal subunit.

This protein is one of the early assembly proteins of the 50S ribosomal subunit, although it is not seen to bind rRNA by itself. It is important during the early stages of 50S assembly. The protein is Large ribosomal subunit protein uL13 of Synechococcus sp. (strain JA-2-3B'a(2-13)) (Cyanobacteria bacterium Yellowstone B-Prime).